The sequence spans 515 residues: Integrator complex subunit 14 (515 aa).

The region spanning 2-204 (PTVVVMDVSL…KNVQSMFGKL (203 aa)) is the VWFA domain. Positions 10, 12, and 86 each coordinate Mg(2+). An N6-acetyllysine modification is found at K418.

The protein belongs to the Integrator subunit 14 family. Component of the Integrator complex, composed of core subunits INTS1, INTS2, INTS3, INTS4, INTS5, INTS6, INTS7, INTS8, INTS9/RC74, INTS10, INTS11/CPSF3L, INTS12, INTS13, INTS14 and INTS15. The core complex associates with protein phosphatase 2A subunits PPP2CA and PPP2R1A, to form the Integrator-PP2A (INTAC) complex. INTS14 is part of the tail subcomplex, composed of INTS10, INTS13, INTS14 and INTS15.

It localises to the nucleus. In terms of biological role, component of the integrator complex, a multiprotein complex that terminates RNA polymerase II (Pol II) transcription in the promoter-proximal region of genes. The integrator complex provides a quality checkpoint during transcription elongation by driving premature transcription termination of transcripts that are unfavorably configured for transcriptional elongation: the complex terminates transcription by (1) catalyzing dephosphorylation of the C-terminal domain (CTD) of Pol II subunit POLR2A/RPB1 and SUPT5H/SPT5, (2) degrading the exiting nascent RNA transcript via endonuclease activity and (3) promoting the release of Pol II from bound DNA. The integrator complex is also involved in terminating the synthesis of non-coding Pol II transcripts, such as enhancer RNAs (eRNAs), small nuclear RNAs (snRNAs), telomerase RNAs and long non-coding RNAs (lncRNAs). Within the integrator complex, INTS14 is part of the integrator tail module that acts as a platform for the recruitment of transcription factors at promoters. The chain is Integrator complex subunit 14 from Mus musculus (Mouse).